The sequence spans 147 residues: Nitric oxide reductase subunit C (147 aa).

The helical; Signal-anchor transmembrane segment at 13 to 29 (VFYGGSLFFIAVFVGLT) threads the bilayer. Positions 59, 62, and 63 each coordinate heme c.

In terms of assembly, heterodimer of cytochromes b (large subunit) and c (small subunit).

It localises to the cell membrane. Functionally, component of the anaerobic respiratory chain that transforms nitrate to dinitrogen (denitrification). The polypeptide is Nitric oxide reductase subunit C (norC) (Cereibacter sphaeroides (strain ATCC 17025 / ATH 2.4.3) (Rhodobacter sphaeroides)).